Consider the following 262-residue polypeptide: uncharacterized protein (262 aa).

In terms of domain architecture, ABC transporter spans 5–223 (IKVENLTKYF…MAYIEYLDNG (219 aa)). 37–44 (GHNGAGKT) serves as a coordination point for ATP.

This sequence belongs to the ABC transporter superfamily.

This is an uncharacterized protein from Methanocaldococcus jannaschii (strain ATCC 43067 / DSM 2661 / JAL-1 / JCM 10045 / NBRC 100440) (Methanococcus jannaschii).